The primary structure comprises 216 residues: Phosphatidylserine decarboxylase proenzyme (216 aa).

Catalysis depends on serine 183, which acts as the Schiff-base intermediate with substrate; via pyruvic acid. Serine 183 is subject to Pyruvic acid (Ser); by autocatalysis.

This sequence belongs to the phosphatidylserine decarboxylase family. PSD-A subfamily. Heterodimer of a large membrane-associated beta subunit and a small pyruvoyl-containing alpha subunit. It depends on pyruvate as a cofactor. In terms of processing, is synthesized initially as an inactive proenzyme. Formation of the active enzyme involves a self-maturation process in which the active site pyruvoyl group is generated from an internal serine residue via an autocatalytic post-translational modification. Two non-identical subunits are generated from the proenzyme in this reaction, and the pyruvate is formed at the N-terminus of the alpha chain, which is derived from the carboxyl end of the proenzyme. The post-translation cleavage follows an unusual pathway, termed non-hydrolytic serinolysis, in which the side chain hydroxyl group of the serine supplies its oxygen atom to form the C-terminus of the beta chain, while the remainder of the serine residue undergoes an oxidative deamination to produce ammonia and the pyruvoyl prosthetic group on the alpha chain.

The protein localises to the cell membrane. The enzyme catalyses a 1,2-diacyl-sn-glycero-3-phospho-L-serine + H(+) = a 1,2-diacyl-sn-glycero-3-phosphoethanolamine + CO2. It participates in phospholipid metabolism; phosphatidylethanolamine biosynthesis; phosphatidylethanolamine from CDP-diacylglycerol: step 2/2. Functionally, catalyzes the formation of phosphatidylethanolamine (PtdEtn) from phosphatidylserine (PtdSer). The chain is Phosphatidylserine decarboxylase proenzyme from Chlorobaculum tepidum (strain ATCC 49652 / DSM 12025 / NBRC 103806 / TLS) (Chlorobium tepidum).